The primary structure comprises 392 residues: Sulfate adenylyltransferase (392 aa).

Belongs to the sulfate adenylyltransferase family.

The catalysed reaction is sulfate + ATP + H(+) = adenosine 5'-phosphosulfate + diphosphate. It participates in sulfur metabolism; hydrogen sulfide biosynthesis; sulfite from sulfate: step 1/3. This Trichormus variabilis (strain ATCC 29413 / PCC 7937) (Anabaena variabilis) protein is Sulfate adenylyltransferase.